The primary structure comprises 287 residues: Endolytic peptidoglycan transglycosylase RlpA (287 aa).

The signal sequence occupies residues 1–25 (MKLKTGLNLTALLLFMISVAFPAQA). An SPOR domain is found at 209–284 (LKGTEFYCLK…ANNKPLIVYT (76 aa)).

This sequence belongs to the RlpA family.

In terms of biological role, lytic transglycosylase with a strong preference for naked glycan strands that lack stem peptides. The protein is Endolytic peptidoglycan transglycosylase RlpA of Haemophilus influenzae (strain ATCC 51907 / DSM 11121 / KW20 / Rd).